The chain runs to 92 residues: Small ribosomal subunit protein uS19 (92 aa).

Belongs to the universal ribosomal protein uS19 family.

Its function is as follows. Protein S19 forms a complex with S13 that binds strongly to the 16S ribosomal RNA. The protein is Small ribosomal subunit protein uS19 of Aeromonas hydrophila subsp. hydrophila (strain ATCC 7966 / DSM 30187 / BCRC 13018 / CCUG 14551 / JCM 1027 / KCTC 2358 / NCIMB 9240 / NCTC 8049).